Consider the following 280-residue polypeptide: 3-hydroxyacyl-thioester dehydratase X (280 aa).

The tract at residues 149 to 170 is disordered; sequence QRTSLSGEPKPPPQKKPKLPPP. Residues 162-256 form the MaoC-like domain; that stretch reads QKKPKLPPPA…TAGLYVAEGD (95 aa).

This sequence belongs to the enoyl-CoA hydratase/isomerase family.

It carries out the reaction a (3R)-3-hydroxyacyl-CoA = a (2E)-enoyl-CoA + H2O. It catalyses the reaction (2E)-octenoyl-CoA + H2O = (3R)-hydroxyoctanoyl-CoA. The catalysed reaction is (3R)-3-hydroxydodecanoyl-CoA = (2E)-dodecenoyl-CoA + H2O. The enzyme catalyses (3R)-hydroxyhexadecanoyl-CoA = (2E)-hexadecenoyl-CoA + H2O. It carries out the reaction (3R)-hydroxyeicosanoyl-CoA = (2E)-eicosenoyl-CoA + H2O. It catalyses the reaction (3R)-3-hydroxybutanoyl-CoA = (2E)-butenoyl-CoA + H2O. Its function is as follows. Shows trans-enoyl-CoA hydratase/3-hydroxyacyl-CoA dehydratase activity. Displays a broad chain length specificity, with a predilection for the C8 to C12 substrates. The sequence is that of 3-hydroxyacyl-thioester dehydratase X from Mycobacterium tuberculosis (strain ATCC 25618 / H37Rv).